A 124-amino-acid chain; its full sequence is Ribonuclease pancreatic (124 aa).

Basic and acidic residues predominate over residues 1–13; that stretch reads KESAAAKFERQHM. The interval 1 to 24 is disordered; that stretch reads KESAAAKFERQHMDSSTSSASSSN. Substrate contacts are provided by K7 and R10. H12 functions as the Proton acceptor in the catalytic mechanism. 4 cysteine pairs are disulfide-bonded: C26–C84, C40–C95, C58–C110, and C65–C72. Residue N34 is glycosylated (N-linked (GlcNAc...) asparagine; partial). Substrate-binding positions include 41–45, K66, and R85; that span reads KPVNT. The Proton donor role is filled by H119.

This sequence belongs to the pancreatic ribonuclease family. In terms of assembly, monomer. Interacts with and forms tight 1:1 complexes with RNH1. Dimerization of two such complexes may occur. Interaction with RNH1 inhibits this protein. Pancreas.

It localises to the secreted. It catalyses the reaction an [RNA] containing cytidine + H2O = an [RNA]-3'-cytidine-3'-phosphate + a 5'-hydroxy-ribonucleotide-3'-[RNA].. It carries out the reaction an [RNA] containing uridine + H2O = an [RNA]-3'-uridine-3'-phosphate + a 5'-hydroxy-ribonucleotide-3'-[RNA].. Endonuclease that catalyzes the cleavage of RNA on the 3' side of pyrimidine nucleotides. Acts on single-stranded and double-stranded RNA. The polypeptide is Ribonuclease pancreatic (RNASE1) (Ovis aries (Sheep)).